Reading from the N-terminus, the 685-residue chain is E3 ubiquitin-protein ligase RNF103 (685 aa).

The next 4 helical transmembrane spans lie at 6–26 (FFLL…EAIV), 326–346 (LFVL…FITQ), 366–386 (LLII…LDSF), and 411–431 (MFYS…GLLI). Acidic residues predominate over residues 526-543 (EEMSEGSQDTENDSESEN). The tract at residues 526–550 (EEMSEGSQDTENDSESENTDTLSSE) is disordered. The RING-type zinc-finger motif lies at 621 to 663 (CVVCLENFENGCLLMGLPCGHVFHQNCIVMWLAGGRHCCPVCR).

Interacts with DERL1 and VCP. In terms of tissue distribution, highly expressed in the normal cerebellum but not in the cerebral cortex.

The protein resides in the endoplasmic reticulum membrane. The enzyme catalyses S-ubiquitinyl-[E2 ubiquitin-conjugating enzyme]-L-cysteine + [acceptor protein]-L-lysine = [E2 ubiquitin-conjugating enzyme]-L-cysteine + N(6)-ubiquitinyl-[acceptor protein]-L-lysine.. It participates in protein modification; protein ubiquitination. Acts as an E2-dependent E3 ubiquitin-protein ligase, probably involved in the ER-associated protein degradation pathway. This is E3 ubiquitin-protein ligase RNF103 (RNF103) from Homo sapiens (Human).